The chain runs to 165 residues: Endoribonuclease YbeY (165 aa).

Zn(2+) contacts are provided by histidine 130, histidine 134, and histidine 140.

It belongs to the endoribonuclease YbeY family. Zn(2+) is required as a cofactor.

It is found in the cytoplasm. Single strand-specific metallo-endoribonuclease involved in late-stage 70S ribosome quality control and in maturation of the 3' terminus of the 16S rRNA. The chain is Endoribonuclease YbeY from Streptococcus sanguinis (strain SK36).